The primary structure comprises 289 residues: Phosphatidylserine decarboxylase proenzyme (289 aa).

Catalysis depends on charge relay system; for autoendoproteolytic cleavage activity residues Asp-92, His-149, and Ser-254. The active-site Schiff-base intermediate with substrate; via pyruvic acid; for decarboxylase activity is Ser-254. Ser-254 bears the Pyruvic acid (Ser); by autocatalysis mark.

The protein belongs to the phosphatidylserine decarboxylase family. PSD-B subfamily. Prokaryotic type I sub-subfamily. As to quaternary structure, heterodimer of a large membrane-associated beta subunit and a small pyruvoyl-containing alpha subunit. The cofactor is pyruvate. Post-translationally, is synthesized initially as an inactive proenzyme. Formation of the active enzyme involves a self-maturation process in which the active site pyruvoyl group is generated from an internal serine residue via an autocatalytic post-translational modification. Two non-identical subunits are generated from the proenzyme in this reaction, and the pyruvate is formed at the N-terminus of the alpha chain, which is derived from the carboxyl end of the proenzyme. The autoendoproteolytic cleavage occurs by a canonical serine protease mechanism, in which the side chain hydroxyl group of the serine supplies its oxygen atom to form the C-terminus of the beta chain, while the remainder of the serine residue undergoes an oxidative deamination to produce ammonia and the pyruvoyl prosthetic group on the alpha chain. During this reaction, the Ser that is part of the protease active site of the proenzyme becomes the pyruvoyl prosthetic group, which constitutes an essential element of the active site of the mature decarboxylase.

Its subcellular location is the cell membrane. The enzyme catalyses a 1,2-diacyl-sn-glycero-3-phospho-L-serine + H(+) = a 1,2-diacyl-sn-glycero-3-phosphoethanolamine + CO2. It functions in the pathway phospholipid metabolism; phosphatidylethanolamine biosynthesis; phosphatidylethanolamine from CDP-diacylglycerol: step 2/2. In terms of biological role, catalyzes the formation of phosphatidylethanolamine (PtdEtn) from phosphatidylserine (PtdSer). The sequence is that of Phosphatidylserine decarboxylase proenzyme from Pseudomonas aeruginosa (strain LESB58).